Consider the following 242-residue polypeptide: Probable septum site-determining protein MinC (242 aa).

Over residues 120–135 the composition is skewed to basic and acidic residues; it reads APKKVEEKPAEPEHKP. Positions 120–144 are disordered; that stretch reads APKKVEEKPAEPEHKPSRIVTSPVR.

This sequence belongs to the MinC family. Interacts with MinD and FtsZ.

Its function is as follows. Cell division inhibitor that blocks the formation of polar Z ring septums. Rapidly oscillates between the poles of the cell to destabilize FtsZ filaments that have formed before they mature into polar Z rings. Prevents FtsZ polymerization. The sequence is that of Probable septum site-determining protein MinC from Ectopseudomonas mendocina (strain ymp) (Pseudomonas mendocina).